A 314-amino-acid polypeptide reads, in one-letter code: Protein REGULATOR OF FATTY ACID COMPOSITION 3, chloroplastic (314 aa).

A chloroplast-targeting transit peptide spans 1-47 (MESLLHASSSLVSLRPRIDGRDSFINPSRVCLNPSLGRRGSKPLPLV). Disordered regions lie at residues 49–73 (AAKKKKSKKDDNHNFSARPDEATGP) and 214–314 (AITE…NVGG). The span at 56 to 69 (KKDDNHNFSARPDE) shows a compositional bias: basic and acidic residues. 2 stretches are compositionally biased toward acidic residues: residues 233–269 (EYYDDDEEEEIEEDEDEGEGEDEEDADNIEYEVDDDG) and 277–294 (GDEEEGEEEEDGASEQEE). Residues 295 to 308 (GQDKSTNGRRETRR) show a composition bias toward basic and acidic residues.

Belongs to the bacterial ribosomal protein bS6 family. Interacts with CFM3B/SPRT2 in plastids. As to expression, expressed ubiquitously in roots, leaves, stems, flower buds, flowers and siliques.

The protein localises to the plastid. It is found in the chloroplast. Prevents non-specific action of the splicing factor CFM3b during plastid rRNA biogenesis to improve the accuracy of plastid rRNA processing. Required for plastid functions such as photosynthesis, intracellular distribution, plastid rRNAs biosynthesis and plastid gene expression in roots. Involved in a sucrose-conditional process important for the organization of root lateral and apical meristems (e.g. establishment of RAM from pericycle and symplasmic connectivity), and subsequent primary and lateral roots development. Modulates C18 unsaturated fatty acid metabolism. The sequence is that of Protein REGULATOR OF FATTY ACID COMPOSITION 3, chloroplastic from Arabidopsis thaliana (Mouse-ear cress).